The chain runs to 1864 residues: MEGCVGEESFQMWELNRRLEAYLTRVKTLEEQNQLLSAELGGLRAQSGDASWRARADDELAALRVLVDQRWREKHEAEVQRDNLAEELESVAGRCQQVRLARERTIEEAACSRRALEAEKNARGWLSTQAAELERELEALRASHEEERAHLNAQAACTPRRPPAPAHASPIRAPEVEELARRLGEVWRGAVRDYQERVAHMESSLGQARERLGQAVRGARESRLEVQQLQADRDSLQERREALEQRLEGRWQDRLQATEKFQLAVEALEQEKQGLQSQIAQILEGGQQLAHLKMSLSLEVATYRTLLEAENSRLQTPGRSSQASLGFPDPKLKLHFLGIPEDQHLGSVLPVLSPTSFSSPLPNTLETPVTAFLKTQEFLKARTPTLASTPIPPMSEAPYPKNAEVRAQDVPHSLLQGGRQQAPEPLWAEATVPSSTGVLPELEEPGGEQPDHFPDDPTSLAPPLNPHHSILEAKDRESSESRVSSIFQEEEGQIWELVKKEAATEVKVENSLAQEIQESGLDTEEIQDSQGPLQMETLEALGDEPLMSLKTQNHETPGKENCNSSIEENSGTVKSPEKEKQTPLKSLEEKNVEAEKTLENGVLELSKPLGEEEPRMEDQELMSPEHTLETVSFLGKENQEVVRSSEEQNLESLITFKEESQYPLGGPEAEDQMLERLVEKEDQRFPRSPEEDQQAFRPLEKENQEPLRFEEAEDQVLERLIEKERQESLKSPEEEDQQAFRLLEKENQEPLRFEDAEDQVLERLIEKERQESLKSPEEEDQQAFRLLEKENQEPLRFEEAEDQVLERLVEKESQESLKSPEEEDQRTGKPLEKENQESLRSLDENQETIVLLESKNQRPLRSLEVEEEEQRIVKPLEKVSQVSLESLEKENVQSPRYLEEDDHMIKSLLEDKTHEILGSLEDRNGENFIPPENETQGSLRPPEEEDQRIVNHLEKESQEFLRSPEAEEEEEQVMVRSLEGENHDPLSSVVKEEQMAESKLENESQDSRKSLEDESQETFGSLEKENLESLRSLAGQDQEEQKLEQETQQPLRAVEDEQMTVNPPEKVDPELPKPLRNDQEVVRSLDKENQESLVSLNEGGMETVKSSETENIESLETVGECLGRRKSVDTQEPLWSTEVTSETIEPLEDETQEPLGCVDENQEVLTPLERESQELRSLGKWNPETVESPGGVEDSQQCLEVEEGPEREQHQESLRSLGEVEWELPGSGSQQRWEDVVEDGEGQEASLGATGVETEDKAELHLRGQGGEEKAVEEGELLQDAVGEAWSLGSSEPKEQRVPAEPLDDLEGQPEQTGTLEVPVAQGMPEATEQDEDRAQAGEQDSVEVTLGLEAARAGLELEQEVVGLEDPRHFAREEAIHPSLGEESVKAKIDQGLEEPGKEPKEAGALDSGIPELPKTSSETLECKGWEESGEGWGEEEASLETSDHEGSHAPQPRPPKTEEDEGLQAALTVPGPKLLEPCSPIPILTDAHELQPQAEGIQEAGWQPEAGTEALGRVEDEPEFGRGEIPEGLQDWEEGREDSEADELGETLPDSTPLGLYLKSPASPKWEQAGEQRLFPQGEARKEGWSPAALAAQGLSDPPEEEQQGHDSDLSSEEFEDLGTEASLLPGVPKEVSDHLGQEPPVLQPACWDQGGESDGFADEEESGEEGEEEDADEEEGAESGTQWWGPGPSGGGVKVQDVTQRGDLEHESVGDSGLWDDGLSGAAANVLVTALETVSQDSAEPSGSEGSESASLEGEEGQAIDHLDAPQEVTSVVPGAGDTFDISGQGPNLESEQVNGRMENGLEQAEGQVVLHGDEDQGIPLQEQGTLKAPLVGSPVHLGPSQPLKFTLSGVDGDSWSSGED.

Methionine 1 is subject to N-acetylmethionine. Residues 1 to 7 (MEGCVGE) form a head region. Positions 8 to 43 (ESFQMWELNRRLEAYLTRVKTLEEQNQLLSAELGGL) are coil 1A. The region spanning 8–314 (ESFQMWELNR…TLLEAENSRL (307 aa)) is the IF rod domain. Residues 44–55 (RAQSGDASWRAR) form a linker 1 region. The tract at residues 56-151 (ADDELAALRV…ASHEEERAHL (96 aa)) is coil 1B. A linker 12 region spans residues 152 to 174 (NAQAACTPRRPPAPAHASPIRAP). Residues 175 to 193 (EVEELARRLGEVWRGAVRD) are coil 2A. The interval 194 to 196 (YQE) is linker 2. The tract at residues 197–314 (RVAHMESSLG…TLLEAENSRL (118 aa)) is coil 2B. Position 312 is a phosphoserine (serine 312). Positions 315–1864 (QTPGRSSQAS…DGDSWSSGED (1550 aa)) are tail. A Phosphothreonine modification is found at threonine 316. Residues serine 356 and serine 359 each carry the phosphoserine modification. At threonine 389 the chain carries Phosphothreonine. 3 disordered regions span residues 437-492 (GVLP…EEEG), 515-625 (EIQE…MSPE), and 680-845 (KEDQ…LDEN). Over residues 469–480 (SILEAKDRESSE) the composition is skewed to basic and acidic residues. Over residues 559–573 (KENCNSSIEENSGTV) the composition is skewed to polar residues. Phosphoserine occurs at positions 565 and 575. Composition is skewed to basic and acidic residues over residues 575–598 (SPEK…EKTL) and 609–618 (LGEEEPRMED). Phosphoserine is present on residues serine 623, serine 688, serine 731, serine 775, serine 841, serine 862, and serine 894. Basic and acidic residues-rich tracts occupy residues 680–690 (KEDQRFPRSPE), 698–732 (PLEK…LKSP), 742–776 (LLEK…LKSP), and 786–843 (LLEK…RSLD). Composition is skewed to basic and acidic residues over residues 916–925 (ILGSLEDRNG), 947–965 (QRIV…RSPE), and 978–1012 (LEGE…KSLE). Residues 916-1113 (ILGSLEDRNG…VKSSETENIE (198 aa)) form a disordered region. A phosphoserine mark is found at serine 963, serine 1010, and serine 1021. Basic and acidic residues predominate over residues 1065-1090 (EKVDPELPKPLRNDQEVVRSLDKENQ). A phosphoserine mark is found at serine 1106 and serine 1127. Disordered stretches follow at residues 1129–1158 (DTQE…LGCV), 1175–1344 (LRSL…DSVE), 1375–1722 (EAIH…DDGL), and 1735–1807 (ETVS…GLEQ). Residues 1133-1143 (PLWSTEVTSET) show a composition bias toward polar residues. Phosphoserine occurs at positions 1177, 1188, and 1195. Positions 1204–1213 (GPEREQHQES) are enriched in basic and acidic residues. Serine 1216 carries the phosphoserine modification. The segment covering 1254–1273 (TEDKAELHLRGQGGEEKAVE) has biased composition (basic and acidic residues). Serine 1290 bears the Phosphoserine mark. The span at 1384 to 1405 (ESVKAKIDQGLEEPGKEPKEAG) shows a compositional bias: basic and acidic residues. Positions 1429–1440 (ESGEGWGEEEAS) are enriched in acidic residues. Residues 1514–1527 (GRVEDEPEFGRGEI) show a composition bias toward basic and acidic residues. Residues 1532-1547 (QDWEEGREDSEADELG) show a composition bias toward acidic residues. Phosphoserine is present on residues serine 1541 and serine 1565. The span at 1612–1621 (LSSEEFEDLG) shows a compositional bias: acidic residues. Phosphoserine occurs at positions 1656 and 1665. Acidic residues predominate over residues 1658-1680 (GFADEEESGEEGEEEDADEEEGA). Positions 1703 to 1712 (QRGDLEHESV) are enriched in basic and acidic residues. 2 stretches are compositionally biased toward low complexity: residues 1713–1722 (GDSGLWDDGL) and 1741–1755 (SAEP…SASL). Serine 1745 and serine 1747 each carry phosphoserine. The span at 1788–1797 (QGPNLESEQV) shows a compositional bias: polar residues. Serine 1837, serine 1860, and serine 1861 each carry phosphoserine. The interval 1841 to 1864 (LGPSQPLKFTLSGVDGDSWSSGED) is disordered.

Belongs to the intermediate filament family. Forms homodimers and homotetramers in vitro. In mixtures with other intermediate filament proteins such as vimentin and alpha-internexin, this protein preferentially forms heterodimers which can assemble to form intermediate filaments if nestin does not exceed 25%. Interacts with FHOD3. Post-translationally, constitutively phosphorylated. This increases during mitosis when the cytoplasmic intermediate filament network is reorganized.

Its function is as follows. Required for brain and eye development. Promotes the disassembly of phosphorylated vimentin intermediate filaments (IF) during mitosis and may play a role in the trafficking and distribution of IF proteins and other cellular factors to daughter cells during progenitor cell division. Required for survival, renewal and mitogen-stimulated proliferation of neural progenitor cells. In Mus musculus (Mouse), this protein is Nestin (Nes).